Consider the following 267-residue polypeptide: Orotidine 5'-phosphate decarboxylase (267 aa).

Position 2 is an N-acetylserine (Ser2). Residues Asp37, 59–61, and 91–100 each bind substrate; these read KTH and DRKFADIGNT. Lys93 acts as the Proton donor in catalysis. Residues Lys93 and Lys209 each participate in a glycyl lysine isopeptide (Lys-Gly) (interchain with G-Cter in ubiquitin) cross-link. 2 residues coordinate substrate: Tyr217 and Arg235. Lys253 participates in a covalent cross-link: Glycyl lysine isopeptide (Lys-Gly) (interchain with G-Cter in ubiquitin).

This sequence belongs to the OMP decarboxylase family.

It carries out the reaction orotidine 5'-phosphate + H(+) = UMP + CO2. The protein operates within pyrimidine metabolism; UMP biosynthesis via de novo pathway; UMP from orotate: step 2/2. The sequence is that of Orotidine 5'-phosphate decarboxylase (URA3) from Saccharomyces cerevisiae (strain ATCC 204508 / S288c) (Baker's yeast).